Reading from the N-terminus, the 322-residue chain is Dirigent protein 9 (322 aa).

Positions 1-20 (MAKALHITIFLFLISSNLLA) are cleaved as a signal peptide.

It belongs to the plant dirigent protein family. Homodimer.

It is found in the secreted. The protein resides in the extracellular space. The protein localises to the apoplast. Its function is as follows. Dirigent proteins impart stereoselectivity on the phenoxy radical-coupling reaction, yielding optically active lignans from two molecules of coniferyl alcohol in the biosynthesis of lignans, flavonolignans, and alkaloids and thus plays a central role in plant secondary metabolism. This chain is Dirigent protein 9 (DIR9), found in Arabidopsis thaliana (Mouse-ear cress).